Here is a 158-residue protein sequence, read N- to C-terminus: 2-C-methyl-D-erythritol 2,4-cyclodiphosphate synthase (158 aa).

A divalent metal cation-binding residues include Asp-9 and His-11. 4-CDP-2-C-methyl-D-erythritol 2-phosphate-binding positions include 9–11 (DVH) and 35–36 (HS). His-43 contacts a divalent metal cation. 4-CDP-2-C-methyl-D-erythritol 2-phosphate contacts are provided by residues 57–59 (DIG), 62–66 (FPDTD), 133–136 (TTTE), Phe-140, and Arg-143.

The protein belongs to the IspF family. As to quaternary structure, homotrimer. It depends on a divalent metal cation as a cofactor.

It carries out the reaction 4-CDP-2-C-methyl-D-erythritol 2-phosphate = 2-C-methyl-D-erythritol 2,4-cyclic diphosphate + CMP. Its pathway is isoprenoid biosynthesis; isopentenyl diphosphate biosynthesis via DXP pathway; isopentenyl diphosphate from 1-deoxy-D-xylulose 5-phosphate: step 4/6. Functionally, involved in the biosynthesis of isopentenyl diphosphate (IPP) and dimethylallyl diphosphate (DMAPP), two major building blocks of isoprenoid compounds. Catalyzes the conversion of 4-diphosphocytidyl-2-C-methyl-D-erythritol 2-phosphate (CDP-ME2P) to 2-C-methyl-D-erythritol 2,4-cyclodiphosphate (ME-CPP) with a corresponding release of cytidine 5-monophosphate (CMP). The polypeptide is 2-C-methyl-D-erythritol 2,4-cyclodiphosphate synthase (Haemophilus influenzae (strain PittGG)).